The sequence spans 185 residues: Elongation factor P (185 aa).

It belongs to the elongation factor P family.

The protein localises to the cytoplasm. The protein operates within protein biosynthesis; polypeptide chain elongation. Its function is as follows. Involved in peptide bond synthesis. Stimulates efficient translation and peptide-bond synthesis on native or reconstituted 70S ribosomes in vitro. Probably functions indirectly by altering the affinity of the ribosome for aminoacyl-tRNA, thus increasing their reactivity as acceptors for peptidyl transferase. In Bacillus cereus (strain ATCC 10987 / NRS 248), this protein is Elongation factor P.